The following is a 795-amino-acid chain: Phenylalanine--tRNA ligase beta subunit (795 aa).

Residues 39–148 (AGEFNGVVVG…ADAPVGKDFR (110 aa)) enclose the tRNA-binding domain. The 76-residue stretch at 401–476 (PKLNKVQLRR…RIYGYNSIPN (76 aa)) folds into the B5 domain. Residues Asp-454, Asp-460, Glu-463, and Glu-464 each contribute to the Mg(2+) site. The FDX-ACB domain maps to 701-794 (SKFPANKRDL…LKDRFNAYLR (94 aa)).

This sequence belongs to the phenylalanyl-tRNA synthetase beta subunit family. Type 1 subfamily. As to quaternary structure, tetramer of two alpha and two beta subunits. Mg(2+) serves as cofactor.

It is found in the cytoplasm. It carries out the reaction tRNA(Phe) + L-phenylalanine + ATP = L-phenylalanyl-tRNA(Phe) + AMP + diphosphate + H(+). This is Phenylalanine--tRNA ligase beta subunit from Mannheimia succiniciproducens (strain KCTC 0769BP / MBEL55E).